Consider the following 175-residue polypeptide: Large ribosomal subunit protein bL17m (175 aa).

The transit peptide at 1–8 (MRLSVCAA) directs the protein to the mitochondrion. The interval 155 to 175 (DLSQSQEASNHSSHTAQTPGI) is disordered. A compositionally biased stretch (polar residues) spans 157–175 (SQSQEASNHSSHTAQTPGI).

This sequence belongs to the bacterial ribosomal protein bL17 family. In terms of assembly, component of the mitochondrial ribosome large subunit (39S) which comprises a 16S rRNA and about 50 distinct proteins.

Its subcellular location is the mitochondrion. This Pongo abelii (Sumatran orangutan) protein is Large ribosomal subunit protein bL17m (MRPL17).